The following is a 231-amino-acid chain: ATP phosphoribosyltransferase (231 aa).

This sequence belongs to the ATP phosphoribosyltransferase family. Short subfamily. In terms of assembly, heteromultimer composed of HisG and HisZ subunits.

The protein resides in the cytoplasm. The enzyme catalyses 1-(5-phospho-beta-D-ribosyl)-ATP + diphosphate = 5-phospho-alpha-D-ribose 1-diphosphate + ATP. It participates in amino-acid biosynthesis; L-histidine biosynthesis; L-histidine from 5-phospho-alpha-D-ribose 1-diphosphate: step 1/9. Functionally, catalyzes the condensation of ATP and 5-phosphoribose 1-diphosphate to form N'-(5'-phosphoribosyl)-ATP (PR-ATP). Has a crucial role in the pathway because the rate of histidine biosynthesis seems to be controlled primarily by regulation of HisG enzymatic activity. This chain is ATP phosphoribosyltransferase (hisG), found in Sinorhizobium fredii (strain NBRC 101917 / NGR234).